The following is a 282-amino-acid chain: Ammonia transport outward protein 2 (282 aa).

Residues 1 to 34 (MSDREQSSGNTAFENPKALDSSEGEFISENNDQS) are disordered. Position 2 is an N-acetylserine (S2). Phosphoserine occurs at positions 2, 7, 21, 22, 28, and 40. Topologically, residues 2–86 (SDREQSSGNT…GLAPAPVHKF (85 aa)) are extracellular. A helical membrane pass occupies residues 87 to 107 (ANPAPLGLSGFALTTFVLSMF). Topologically, residues 108 to 119 (NARAQGITIPNV) are cytoplasmic. The chain crosses the membrane as a helical span at residues 120–140 (VVGCAMFYGGLVQLIAGIWEI). Residues 141 to 150 (ALENTFGGTA) lie on the Extracellular side of the membrane. A helical membrane pass occupies residues 151–171 (LCSFGGFWLSFGAIYIPWFGI). Topologically, residues 172–184 (LDAYKDKESDLGN) are cytoplasmic. A helical membrane pass occupies residues 185–205 (ALGFYLLGWALFTFGLSVCTM). Topologically, residues 206–207 (KS) are extracellular. A helical transmembrane segment spans residues 208–228 (TIMFFALFFLLAVTFLLLSIA). The Cytoplasmic segment spans residues 229 to 238 (NFTGEVGVTR). The helical transmembrane segment at 239 to 259 (AGGVLGVIVAFIAWYNAYAGI) threads the bilayer. Residues 260–282 (ATRQNSYIMVHPFALPSNDKVFF) lie on the Extracellular side of the membrane.

This sequence belongs to the acetate uptake transporter (AceTr) (TC 2.A.96) family.

The protein resides in the cell membrane. Its function is as follows. Transporter protein required for ammonia export. Involved in acetate resistance. This chain is Ammonia transport outward protein 2 (ATO2), found in Saccharomyces cerevisiae (strain ATCC 204508 / S288c) (Baker's yeast).